Consider the following 441-residue polypeptide: MTTVTRFAPSPTGFIHVGNLRTALMNWAIARKSGGTFILRLDDTDRERSKQEYSDAIMQDLEWLGLTWDRLERQSDRLDRYAEAAGDLRRAGRFYECFESPTELDLKRKKLLNMGKPPVYDRAALKLSDEDRARLREERGGYWRFLLDQERIEWTDGILGPISIDAASVSDPVLIRADGQVLYTFASSVDDIDMGVTFIVRGADHVTNTATQIQIMQAMGGTPPSFAHHSLLTGAQGEALSKRLGTLSLRDLRARGVEPMALLSLMARLGSSQPVELFRTHEELLAGFDVGTFGAAPTKFDAEDLFPLTRHYVQGLPFEAVAERIRSLGVPDALAEPFWRVAKDNIAVLEDLGGWWTLFSEGAEPQIDPEDADFIRQAMALLPEPPYGPETWGQWTAAVKEATGRKGKGLFMPLRKALTGQAHGPEMADVMPLLQTVRAKG.

Positions 9–19 match the 'HIGH' region motif; the sequence is PSPTGFIHVGN. The 'KMSKS' region motif lies at 239-243; that stretch reads ALSKR. Lys242 contributes to the ATP binding site.

This sequence belongs to the class-I aminoacyl-tRNA synthetase family. Glutamate--tRNA ligase type 1 subfamily. As to quaternary structure, monomer.

The protein localises to the cytoplasm. It carries out the reaction tRNA(Glu) + L-glutamate + ATP = L-glutamyl-tRNA(Glu) + AMP + diphosphate. Its function is as follows. Catalyzes the attachment of glutamate to tRNA(Glu) in a two-step reaction: glutamate is first activated by ATP to form Glu-AMP and then transferred to the acceptor end of tRNA(Glu). This chain is Glutamate--tRNA ligase 1, found in Cereibacter sphaeroides (strain ATCC 17025 / ATH 2.4.3) (Rhodobacter sphaeroides).